A 72-amino-acid chain; its full sequence is Cytochrome c oxidase subunit 8C, mitochondrial (72 aa).

The N-terminal 29 residues, 1 to 29 (MSRLLLLCSSLLRHRAVLFSKPGHPGRLS), are a transit peptide targeting the mitochondrion. Residues 30–40 (HSESPQKKILS) are Mitochondrial matrix-facing. A helical membrane pass occupies residues 41-64 (PTESAVGIVVFFTTFYIPAAYVLS). The Mitochondrial intermembrane segment spans residues 65–72 (SLKYFKGE).

This sequence belongs to the cytochrome c oxidase VIII family. Component of the cytochrome c oxidase (complex IV, CIV), a multisubunit enzyme composed of 14 subunits. The complex is composed of a catalytic core of 3 subunits MT-CO1, MT-CO2 and MT-CO3, encoded in the mitochondrial DNA, and 11 supernumerary subunits COX4I, COX5A, COX5B, COX6A, COX6B, COX6C, COX7A, COX7B, COX7C, COX8 and NDUFA4, which are encoded in the nuclear genome. The complex exists as a monomer or a dimer and forms supercomplexes (SCs) in the inner mitochondrial membrane with NADH-ubiquinone oxidoreductase (complex I, CI) and ubiquinol-cytochrome c oxidoreductase (cytochrome b-c1 complex, complex III, CIII), resulting in different assemblies (supercomplex SCI(1)III(2)IV(1) and megacomplex MCI(2)III(2)IV(2)).

The protein resides in the mitochondrion inner membrane. It functions in the pathway energy metabolism; oxidative phosphorylation. Component of the cytochrome c oxidase, the last enzyme in the mitochondrial electron transport chain which drives oxidative phosphorylation. The respiratory chain contains 3 multisubunit complexes succinate dehydrogenase (complex II, CII), ubiquinol-cytochrome c oxidoreductase (cytochrome b-c1 complex, complex III, CIII) and cytochrome c oxidase (complex IV, CIV), that cooperate to transfer electrons derived from NADH and succinate to molecular oxygen, creating an electrochemical gradient over the inner membrane that drives transmembrane transport and the ATP synthase. Cytochrome c oxidase is the component of the respiratory chain that catalyzes the reduction of oxygen to water. Electrons originating from reduced cytochrome c in the intermembrane space (IMS) are transferred via the dinuclear copper A center (CU(A)) of subunit 2 and heme A of subunit 1 to the active site in subunit 1, a binuclear center (BNC) formed by heme A3 and copper B (CU(B)). The BNC reduces molecular oxygen to 2 water molecules using 4 electrons from cytochrome c in the IMS and 4 protons from the mitochondrial matrix. The protein is Cytochrome c oxidase subunit 8C, mitochondrial (Cox8c) of Mus musculus (Mouse).